The chain runs to 72 residues: Long neurotoxin OH-17 (72 aa).

5 disulfides stabilise this stretch: C3–C21, C14–C42, C27–C31, C46–C57, and C58–C63.

It belongs to the three-finger toxin family. Long-chain subfamily. Type II alpha-neurotoxin sub-subfamily. Expressed by the venom gland.

Its subcellular location is the secreted. Functionally, binds with high affinity to muscular (alpha-1/CHRNA1) and neuronal (alpha-7/CHRNA7) nicotinic acetylcholine receptor (nAChR) and inhibits acetylcholine from binding to the receptor, thereby impairing neuromuscular and neuronal transmission. In Ophiophagus hannah (King cobra), this protein is Long neurotoxin OH-17.